Here is a 214-residue protein sequence, read N- to C-terminus: GTP-binding nuclear protein Ran (214 aa).

Residues Tyr6–Gln170 enclose the Small GTPase Ran-type domain. Asp17–Thr24 serves as a coordination point for GTP. The interval Lys36–Val44 is switch-I. GTP contacts are provided by residues Gly67, Asn121–Asp124, and Ser149–Arg151. The interval Gly67–Asp83 is switch-II.

The protein belongs to the small GTPase superfamily. Ran family. In terms of assembly, found in a nuclear export complex with RanGTP, exportin and pre-miRNA.

Its subcellular location is the nucleus. Its function is as follows. GTP-binding protein involved in nucleocytoplasmic transport. Required for the import of protein into the nucleus and also for RNA export. Involved in chromatin condensation and control of cell cycle. The polypeptide is GTP-binding nuclear protein Ran (Plasmodium falciparum).